Here is a 348-residue protein sequence, read N- to C-terminus: Chitinase (348 aa).

An N-terminal signal peptide occupies residues 1–29 (MKLKKIIPAFPLLSTVAVGLWLTPTQASA). The 307-residue stretch at 42–348 (KVLVGYWHNW…FATRYSNLVK (307 aa)) folds into the GH18 domain. The active-site Proton donor is the Glu-161.

This sequence belongs to the glycosyl hydrolase 18 family.

The protein resides in the secreted. The enzyme catalyses Random endo-hydrolysis of N-acetyl-beta-D-glucosaminide (1-&gt;4)-beta-linkages in chitin and chitodextrins.. Its pathway is glycan degradation; chitin degradation. Its function is as follows. Involved in chitin degradation. Catalyzes the cleavage of glycosidic linkages in chitooligosaccharides and in alpha- and beta-chitin. Its activity on chitooligosaccharides increases considerably with degrees of polymerization (the initial rate of hydrolysis for GlcNAc5 is about 130-fold higher than that for GlcNAc3). Its activity is greatly stimulated in the presence of the lytic chitin monooxygenase EfCBM33A, which attacks the crystalline structure of chitin and makes the polymer more accessible to the chitinase; combining the two enzymes leads to rapid and complete depolymerization of crystalline chitin, especially with beta-chitin as a substrate. Is likely involved in a chitin degradation pathway that allows E.faecalis V583 to grow on chitin as a carbon source. This chain is Chitinase, found in Enterococcus faecalis (strain ATCC 700802 / V583).